We begin with the raw amino-acid sequence, 230 residues long: Antiholin-like protein LrgB (230 aa).

Transmembrane regions (helical) follow at residues 5–25, 30–50, 61–81, 92–112, 149–169, 177–197, and 209–229; these read MTPY…TLLF, GFFL…FLKV, GGKM…IPLY, WQIL…VFIV, ITSF…ALFL, PIAK…AVGI, and IAVT…MPFI.

The protein belongs to the CidB/LrgB family. LrgB subfamily.

Its subcellular location is the cell membrane. In terms of biological role, inhibits the expression or activity of extracellular murein hydrolases by interacting, possibly with LrgA, with the holin-like protein CidA. The LrgAB and CidA proteins may affect the proton motive force of the membrane. May be involved in programmed cell death (PCD), possibly triggering PCD in response to antibiotics and environmental stresses. The chain is Antiholin-like protein LrgB from Bacillus cereus (strain Q1).